The chain runs to 1040 residues: Chromatin modification-related protein rik1 (1040 aa).

This sequence belongs to the DDB1 family. As to quaternary structure, component of the Clr4 methyltransferase complex (ClrC) composed of at least clr4, rik1, pcu4, rbx1, raf1 and raf2. The cullin pcu4, rik1, raf1, raf2 and the ring-box protein rbx1 are components of an E3 ubiquitin ligase, whose activity is essential for heterochromatin assembly.

It localises to the nucleus. The protein localises to the cytoplasm. Its subcellular location is the cytoskeleton. The protein resides in the microtubule organizing center. It is found in the spindle pole body. It localises to the chromosome. Functionally, component of the Clr4 methyltransferase complex (ClrC) which contributes to the establishment of heterochromatin by specifically methylating histone H3 to form H3K9me. ClrC preferentially ubiquitylates H3K14 and ClrC-mediated H3 ubiquitination promotes clr4 methyltransferase activity for the methylation of H3K9. H3K9me represents a specific tag for epigenetic transcriptional repression by recruiting swi6/HP1 to methylated histones which leads to transcriptional silencing within centromeric heterochromatin, telomeric regions and at the silent mating-type loci. Rik1 is involved in the RNAi-mediated targeting of ClrC to heterochromatic repeat elements. Rik1 also has a function in meiotic telomere clustering. The polypeptide is Chromatin modification-related protein rik1 (rik1) (Schizosaccharomyces pombe (strain 972 / ATCC 24843) (Fission yeast)).